We begin with the raw amino-acid sequence, 375 residues long: Actin-binding Rho-activating protein (375 aa).

Composition is skewed to basic and acidic residues over residues 1–11 and 79–99; these read MAPGEREREAG and KPDRDGEGQHSEEATEVSHIK. Disordered regions lie at residues 1-20 and 38-99; these read MAPGEREREAGPAKSALRKV and NENS…SHIK. Phosphoserine is present on residues Ser150 and Ser182. Basic and acidic residues predominate over residues 173–182; sequence QEEPTWKSDS. A disordered region spans residues 173–204; it reads QEEPTWKSDSVDTEDSGYGGDMEERPEQDAAP. Actin-binding stretches follow at residues 193 to 293 and 294 to 375; these read DMEE…AERA and KRAE…TLLE. 2 interaction with actin regions span residues 234-279 and 346-375; these read SQVD…GDEG and MRARKHGLVHFEGEMLWQGRDDHVVITLLE.

Binds F-actin and ABLIM1, ABLIM2 and ABLIM3. Interaction with ABLIM2 and ABLIM3 enhances activity. Expressed specifically in heart and skeletal muscle.

It is found in the cytoplasm. Its subcellular location is the myofibril. The protein resides in the sarcomere. It localises to the cytoskeleton. Its function is as follows. Acts as an activator of serum response factor (SRF)-dependent transcription possibly by inducing nuclear translocation of MKL1 or MKL2 and through a mechanism requiring Rho-actin signaling. The chain is Actin-binding Rho-activating protein from Mus musculus (Mouse).